A 431-amino-acid polypeptide reads, in one-letter code: Probable sodium/metabolite cotransporter BASS3, chloroplastic (431 aa).

The N-terminal 70 residues, 1–70, are a transit peptide targeting the chloroplast; it reads MTLIASLSLP…RRNSGLVPVV (70 aa). 9 helical membrane passes run 110-130, 145-165, 169-189, 198-218, 238-258, 261-281, 288-308, 325-345, and 387-407; these read FWSA…LSYP, LGGI…ALAF, VPLS…GVLV, TFYA…SSYA, IASV…VVPV, VAMS…GLVL, VVTL…SLCI, LGLI…GYWF, and VPAA…ASFW.

The protein belongs to the bile acid:sodium symporter (BASS) (TC 2.A.28) family.

It is found in the membrane. Its subcellular location is the plastid. The protein resides in the chloroplast envelope. May function as sodium-coupled metabolite transporter across the chloroplast envelope. The sequence is that of Probable sodium/metabolite cotransporter BASS3, chloroplastic (BASS3) from Arabidopsis thaliana (Mouse-ear cress).